A 423-amino-acid chain; its full sequence is UPF0229 protein Pput_0430 (423 aa).

The tract at residues 81-108 is disordered; the sequence is EFTAGEHIPRPQGGGGGGGRGKAGNSGE. The segment covering 92–107 has biased composition (gly residues); it reads QGGGGGGGRGKAGNSG.

Belongs to the UPF0229 family.

This is UPF0229 protein Pput_0430 from Pseudomonas putida (strain ATCC 700007 / DSM 6899 / JCM 31910 / BCRC 17059 / LMG 24140 / F1).